The following is a 326-amino-acid chain: MDVVNACRAFVKVSERGSFTVGAAAAQMSQSVASRRVAALEKHFGERLFDRASRRPSLTPFGRDMLPAARRLVRVADVLEDEARAARSRPMRLAVPASCTTAELARLVADSRERDIRLDVRTAGPEQRAELVRTQEVRAGLLAVPPDQALWAVPLGLAGADEPQTRRVFVESLRLRRGEPGPARCIRVQPEDDVPHIQGRLARLRDAVGLRPAQLSVAPDLTSATADVLSSDDLLLCSPAQAAELGLYWRPVGELRLARGYVLDAAVEADAERLRGRLAPYLARALGATADHGPDPATGAGPGADAGTEPGARAEPGAPEEGAQAC.

The 59-residue stretch at 1-59 folds into the HTH lysR-type domain; that stretch reads MDVVNACRAFVKVSERGSFTVGAAAAQMSQSVASRRVAALEKHFGERLFDRASRRPSLT. Residues 19–38 constitute a DNA-binding region (H-T-H motif); sequence FTVGAAAAQMSQSVASRRVA. The interval 289-326 is disordered; it reads TADHGPDPATGAGPGADAGTEPGARAEPGAPEEGAQAC. The span at 295-326 shows a compositional bias: low complexity; that stretch reads DPATGAGPGADAGTEPGARAEPGAPEEGAQAC.

The protein belongs to the LysR transcriptional regulatory family.

Functionally, positive regulator of the expression of the gene (blaB) for beta-lactamase. It binds to the blaL-blaA intercistronic region. This chain is HTH-type transcriptional regulator BlaA (blaA), found in Streptomyces cacaoi.